Consider the following 561-residue polypeptide: MELDQVGWRRSRKLCTDNLDQGSKTLETCKNIGGYFKPQGPGTEHINELITGDSIVSAEAVWDHVTMANRELAFKAGDVIKVLDASNKDWWWGQIDDEEGWFPASFVRLWVNQEDGVEEGPSDVQNGHLDPNSDCLCLGRPLQNRDQMRANVINEIMSTERHYIKHLKDICEGYLKQCRKRRDMFSDEQLKVIFGNIEDIYRFQMGFVRDLEKQYNNDDPHLSEIGPCFLEHQDGFWIYSEYCNNHLDACMELSKLMKDSRYQHFFEACRLLQQMIDIAIDGFLLTPVQKICKYPLQLAELLKYTAQDHSDYRYVAAALAVMRNVTQQINERKRRLENIDKIAQWQASVLDWEGEDILDRSSELIYTGEMAWIYQPYGRNQQRVFFLFDHQMVLCKKDLIRRDILYYKGRIDMDKYEVVDIEDGRDDDFNVSMKNAFKLHNKETEEIHLFFAKKLEEKIRWLRAFREERKMVQEDEKIGFEISENQKRQAAMTVRKVSKQKGVNSARSVPPSYPPPQDPLNQGQYLVPDGIAQSQVFEFTEPKRSQSPFWQNFSRLTPFKK.

The region spanning 53 to 112 (DSIVSAEAVWDHVTMANRELAFKAGDVIKVLDASNKDWWWGQIDDEEGWFPASFVRLWVN) is the SH3 domain. Positions 145-155 (RDQMRANVINE) are interaction with GPHN. In terms of domain architecture, DH spans 148–332 (MRANVINEIM…RNVTQQINER (185 aa)). Positions 363 to 470 (ELIYTGEMAW…WLRAFREERK (108 aa)) constitute a PH domain. A disordered region spans residues 499-524 (KQKGVNSARSVPPSYPPPQDPLNQGQ). Ser547 bears the Phosphoserine mark.

As to quaternary structure, interacts with GPHN.

The protein resides in the cytoplasm. Its subcellular location is the postsynaptic density. In terms of biological role, acts as a guanine nucleotide exchange factor (GEF) for CDC42. Promotes formation of GPHN clusters. In Bos taurus (Bovine), this protein is Rho guanine nucleotide exchange factor 9 (ARHGEF9).